Reading from the N-terminus, the 919-residue chain is Sarcosine dehydrogenase, mitochondrial (919 aa).

The transit peptide at 1–22 directs the protein to the mitochondrion; sequence MASLSRVLRVAATCPRGRAAWN. Lys38 carries the N6-succinyllysine modification. The residue at position 109 (His109) is a Tele-8alpha-FAD histidine. An N6-acetyllysine; alternate modification is found at Lys174. Lys174 carries the N6-succinyllysine; alternate modification. Residues Lys278, Lys378, Lys392, and Lys535 each carry the N6-succinyllysine modification. N6-acetyllysine is present on residues Lys560 and Lys776. The residue at position 778 (Tyr778) is a Phosphotyrosine. Residues Lys803, Lys885, and Lys905 each carry the N6-acetyllysine; alternate modification. Residues Lys803, Lys885, and Lys905 each carry the N6-succinyllysine; alternate modification.

Belongs to the GcvT family. FAD is required as a cofactor.

It is found in the mitochondrion matrix. It catalyses the reaction (6S)-5,6,7,8-tetrahydrofolyl-(gamma-L-Glu)(n) + sarcosine + oxidized [electron-transfer flavoprotein] + H(+) = (6R)-5,10-methylenetetrahydrofolyl-(gamma-L-Glu)(n) + reduced [electron-transfer flavoprotein] + glycine. Its pathway is amine and polyamine degradation; sarcosine degradation; formaldehyde and glycine from sarcosine: step 1/1. In terms of biological role, catalyzes the last step of the oxidative degradation of choline to glycine. Converts sarcosine into glycine. The protein is Sarcosine dehydrogenase, mitochondrial of Mus musculus (Mouse).